Consider the following 132-residue polypeptide: Flagellar assembly factor FliW (132 aa).

Belongs to the FliW family. In terms of assembly, interacts with translational regulator CsrA and flagellin(s).

The protein resides in the cytoplasm. Functionally, acts as an anti-CsrA protein, binds CsrA and prevents it from repressing translation of its target genes, one of which is flagellin. Binds to flagellin and participates in the assembly of the flagellum. This Borreliella afzelii (strain PKo) (Borrelia afzelii) protein is Flagellar assembly factor FliW.